A 365-amino-acid chain; its full sequence is Dual-specificity RNA methyltransferase RlmN (365 aa).

Residue Glu-91 is the Proton acceptor of the active site. The Radical SAM core domain maps to 97–337 (ETSRGTLCIS…TTVRKTRGDD (241 aa)). Cys-104 and Cys-342 are disulfide-bonded. Residues Cys-111, Cys-115, and Cys-118 each coordinate [4Fe-4S] cluster. Residues 168 to 169 (GE), Ser-200, 222 to 224 (SLH), and Asn-299 contribute to the S-adenosyl-L-methionine site. Catalysis depends on Cys-342, which acts as the S-methylcysteine intermediate.

This sequence belongs to the radical SAM superfamily. RlmN family. The cofactor is [4Fe-4S] cluster.

Its subcellular location is the cytoplasm. It catalyses the reaction adenosine(2503) in 23S rRNA + 2 reduced [2Fe-2S]-[ferredoxin] + 2 S-adenosyl-L-methionine = 2-methyladenosine(2503) in 23S rRNA + 5'-deoxyadenosine + L-methionine + 2 oxidized [2Fe-2S]-[ferredoxin] + S-adenosyl-L-homocysteine. The enzyme catalyses adenosine(37) in tRNA + 2 reduced [2Fe-2S]-[ferredoxin] + 2 S-adenosyl-L-methionine = 2-methyladenosine(37) in tRNA + 5'-deoxyadenosine + L-methionine + 2 oxidized [2Fe-2S]-[ferredoxin] + S-adenosyl-L-homocysteine. In terms of biological role, specifically methylates position 2 of adenine 2503 in 23S rRNA and position 2 of adenine 37 in tRNAs. m2A2503 modification seems to play a crucial role in the proofreading step occurring at the peptidyl transferase center and thus would serve to optimize ribosomal fidelity. The sequence is that of Dual-specificity RNA methyltransferase RlmN from Nitrosospira multiformis (strain ATCC 25196 / NCIMB 11849 / C 71).